The chain runs to 424 residues: Serine--tRNA ligase (424 aa).

230-232 (TAE) provides a ligand contact to L-serine. 261 to 263 (RAE) contacts ATP. Glu284 is an L-serine binding site. An ATP-binding site is contributed by 348 to 351 (EISS). Ser384 lines the L-serine pocket.

Belongs to the class-II aminoacyl-tRNA synthetase family. Type-1 seryl-tRNA synthetase subfamily. Homodimer. The tRNA molecule binds across the dimer.

Its subcellular location is the cytoplasm. The enzyme catalyses tRNA(Ser) + L-serine + ATP = L-seryl-tRNA(Ser) + AMP + diphosphate + H(+). It carries out the reaction tRNA(Sec) + L-serine + ATP = L-seryl-tRNA(Sec) + AMP + diphosphate + H(+). It participates in aminoacyl-tRNA biosynthesis; selenocysteinyl-tRNA(Sec) biosynthesis; L-seryl-tRNA(Sec) from L-serine and tRNA(Sec): step 1/1. Its function is as follows. Catalyzes the attachment of serine to tRNA(Ser). Is also able to aminoacylate tRNA(Sec) with serine, to form the misacylated tRNA L-seryl-tRNA(Sec), which will be further converted into selenocysteinyl-tRNA(Sec). The sequence is that of Serine--tRNA ligase from Carboxydothermus hydrogenoformans (strain ATCC BAA-161 / DSM 6008 / Z-2901).